The chain runs to 737 residues: MATKFPSFSQGLAQDPTTRRIWYGIATAHDFESHDGMTEERLYQKLFSTHFGHLAIIGLWVSGNLFHIAWQGNFEQWVADPLHVRPIAHAIWDPHFGQGAIDAFTQAGASSPVNIAYSGLYHWFYTIGMKTNAELYQGSIFMMILSAWALFAGWLHLQPKFRPSLAWFKNAESRLNHHLAVLFGFSSIAWTGHLVHVAIPEARGQHVGWDNFLNVLPHPAGLGPFFTGNWGVYAENPDSLNQVFGSSEGAGTAILTFLGGFHPQTEALWLTDIAHHHLAIGCIFVIAGHMYRTNFGIGHSIKEILETHNPPKGTPGDLGAGHKGLYDTINNSLHFQLGLALASLGVVTSLVAQHMYSMPSYAFIAKDYTTQAALYTHHQYIAIALMCGAFAHGAIFFIRDYDPEANKDNVLARMLEHKEAIISHLSWVSLFLGFHTLGLYVHNDVVVAFGTPEKQILVEPVFAQFVQAASGKAMYGMDVLLSNASSSASLAAQNIPGEHYWLDAINGNTDVFLPIGPGDFLVHHAIALGLHTTTLILVKGALDARGSKLMPDKKDFGYSFPCDGPGRGGTCDISAWDAFYLAVFWALNTVGWLTFYWHWKHLAIWSGNVAQFNESSTYLMGWFRDYLWLNSSQLINGYNPFGSNNLAVWAWMFLFGHLVWATGFMFLISWRGYWQELIETIVWAHQRSPIANMMGYRDKPVALSIVQARVVGLAHFTVGYVLTYAAFLIASTSGKFG.

8 consecutive transmembrane segments (helical) span residues 46–69, 135–158, 175–199, 273–291, 333–356, 372–398, 420–442, and 520–538; these read LFSTHFGHLAIIGLWVSGNLFHIA, LYQGSIFMMILSAWALFAGWLHLQ, LNHHLAVLFGFSSIAWTGHLVHVAI, IAHHHLAIGCIFVIAGHMY, LHFQLGLALASLGVVTSLVAQHMY, AALYTHHQYIAIALMCGAFAHGAIFFI, AIISHLSWVSLFLGFHTLGLYVH, and FLVHHAIALGLHTTTLILV. Residues C562 and C571 each coordinate [4Fe-4S] cluster. 2 consecutive transmembrane segments (helical) span residues 578-599 and 646-668; these read AFYLAVFWALNTVGWLTFYWHW and LAVWAWMFLFGHLVWATGFMFLI. H657, M665, and Y673 together coordinate chlorophyll a. A phylloquinone-binding site is contributed by W674. Residues 710–730 traverse the membrane as a helical segment; it reads VVGLAHFTVGYVLTYAAFLIA.

Belongs to the PsaA/PsaB family. As to quaternary structure, the PsaA/B heterodimer binds the P700 chlorophyll special pair and subsequent electron acceptors. PSI consists of a core antenna complex that captures photons, and an electron transfer chain that converts photonic excitation into a charge separation. The cyanobacterial PSI reaction center is composed of one copy each of PsaA,B,C,D,E,F,I,J,K,L,M and X, and forms trimeric complexes. The cofactor is PSI electron transfer chain: 5 chlorophyll a, 1 chlorophyll a', 2 phylloquinones and 3 4Fe-4S clusters. PSI core antenna: 90 chlorophyll a, 22 carotenoids, 3 phospholipids and 1 galactolipid. P700 is a chlorophyll a/chlorophyll a' dimer, A0 is one or more chlorophyll a, A1 is one or both phylloquinones and FX is a shared 4Fe-4S iron-sulfur center..

It localises to the cellular thylakoid membrane. It carries out the reaction reduced [plastocyanin] + hnu + oxidized [2Fe-2S]-[ferredoxin] = oxidized [plastocyanin] + reduced [2Fe-2S]-[ferredoxin]. Its function is as follows. PsaA and PsaB bind P700, the primary electron donor of photosystem I (PSI), as well as the electron acceptors A0, A1 and FX. PSI is a plastocyanin/cytochrome c6-ferredoxin oxidoreductase, converting photonic excitation into a charge separation, which transfers an electron from the donor P700 chlorophyll pair to the spectroscopically characterized acceptors A0, A1, FX, FA and FB in turn. Oxidized P700 is reduced on the lumenal side of the thylakoid membrane by plastocyanin or cytochrome c6. In Synechococcus sp. (strain CC9605), this protein is Photosystem I P700 chlorophyll a apoprotein A2.